A 1681-amino-acid chain; its full sequence is Sodium channel protein type 7 subunit alpha (1681 aa).

Residues 1–118 (MLTSPEPKGL…RRAAIKALVH (118 aa)) are Cytoplasmic-facing. The I repeat unit spans residues 101-402 (TLSPLNSLRR…ILTMTYEKEK (302 aa)). A helical transmembrane segment spans residues 119–138 (PLFRLLILISVLTDSILMCM). At 139 to 142 (SNLP) the chain is on the extracellular side. Residues 143–168 (EWILAIENTLLGIYAFEILVKVIARG) traverse the membrane as a helical segment. Over 169–179 (IWAGSFSFLGD) the chain is Cytoplasmic. The helical transmembrane segment at 180-197 (LWNWLDFSVTLFELITRF) threads the bilayer. Over 198–201 (SPLS) the chain is Extracellular. Residues 202-220 (SFLMLKTIRTFRILKIIPL) traverse the membrane as a helical segment. Over 221 to 238 (NHGLQSIVMTLAQCLKKL) the chain is Cytoplasmic. The chain crosses the membrane as a helical span at residues 239 to 260 (FGAIALALFFLAVFSLLGMGLF). Residues 261–339 (MGNLKHKCLR…PDNGFTSFDN (79 aa)) are Extracellular-facing. Cys268 and Cys308 are oxidised to a cystine. Asn277, Asn282, Asn288, and Asn310 each carry an N-linked (GlcNAc...) asparagine glycan. The segment at residues 340–367 (FGWSLLAMFRLMTQDYPELLYHQILYAS) is an intramembrane region (pore-forming). Position 368 (Gly368) is a topological domain, extracellular. A helical membrane pass occupies residues 369–408 (KVYMIFFVMISFWFAFYLTSLFLGILTMTYEKEKQRACEE). Topologically, residues 409–506 (SGGLDPKCQQ…EFADRVITHP (98 aa)) are cytoplasmic. Residues 488–757 (CSPCWVKLNE…QLAMARIKSG (270 aa)) form an II repeat. Residues 507 to 522 (LADLFLVICIVLNICF) traverse the membrane as a helical segment. Residues 523–531 (LALEHFPMS) are Extracellular-facing. A helical membrane pass occupies residues 532–560 (EELRSLLHVGNLVFIGIYTIEMILKIIAM). The Cytoplasmic segment spans residues 561–569 (HPYGYFQIS). A helical membrane pass occupies residues 570-587 (WNIFDSILVVLELTEILL). Residues 588–593 (ADVEGL) lie on the Extracellular side of the membrane. The chain crosses the membrane as a helical span at residues 594-609 (AVLITVPLIFIKLGKY). Residues 610 to 626 (GPPFKSLMRILGSSLMA) lie on the Cytoplasmic side of the membrane. Residues 627–655 (LKDLVLLLCIFVYFSAVFGMKLFGRSYKD) form a helical membrane-spanning segment. Topologically, residues 656–673 (CVCHIKEDCQPQRWHMSD) are extracellular. 2 cysteine pairs are disulfide-bonded: Cys658–Cys664 and Cys696–Cys705. Positions 674–700 (FLHAYMTVFRILCGEWIETLWECMEVA) form an intramembrane region, pore-forming. Gly701 is a topological domain (extracellular). A helical transmembrane segment spans residues 702–732 (QAWCIPFYMMVILIGNLLILYLFVTLVSSFS). Over 733–934 (YYDATSEVNK…KTCCKIVENS (202 aa)) the chain is Cytoplasmic. Polar residues predominate over residues 806 to 834 (YKDQSSSTEKTPVTESESQSLIASPSASE). Positions 806–875 (YKDQSSSTEK…MKQSSSSECS (70 aa)) are disordered. Phosphoserine is present on Ser843. An III repeat occupies 916 to 1224 (NGKIWKNIRK…KKQYRALKKL (309 aa)). Residues 935 to 953 (WFECFIGLVTLLCTGTLAL) form a helical membrane-spanning segment. Residues 954–961 (EDIYIDQR) are Extracellular-facing. The helical transmembrane segment at 962–990 (KTTKILLEYADMIFAYIFILEMLLKWVAY) threads the bilayer. Over 991–998 (GFKAFFSN) the chain is Cytoplasmic. Residues 999 to 1020 (NWYKLDFMVVIVFCLSLIGKTR) traverse the membrane as a helical segment. A topological domain (extracellular) is located at residue Glu1021. Residues 1022–1040 (DLNPLTSIKFLRALRVLSQ) traverse the membrane as a helical segment. At 1041-1055 (FERMKVVLRALIKTT) the chain is on the cytoplasmic side. A helical membrane pass occupies residues 1056-1080 (LPTVSVFLVCLMIWLLFSVIGVQLF). The Extracellular segment spans residues 1081-1127 (AGKFYECIDPTKGERFPVFEVMNKSQCEKLLFNESMPWENAKLNFDN). Residues Cys1087 and Cys1107 are joined by a disulfide bond. N-linked (GlcNAc...) asparagine glycosylation is found at Asn1103 and Asn1113. Residues 1128-1154 (VGNGFLSLLQVATFNGWISIMNSAIDS) constitute an intramembrane region (pore-forming). The Extracellular segment spans residues 1155-1167 (VGVNMQPSFEYNL). Residues 1168–1202 (YMYSYFIIFVIFGLFLPLCMLIGVIIRNFNKQKIK) traverse the membrane as a helical segment. At 1203–1250 (QGGSNIFITVKQKKQYRALKKLLYADVQKPTPRPRNKFQGFLFDLVTH) the chain is on the cytoplasmic side. The IV repeat unit spans residues 1233–1531 (TPRPRNKFQG…WNRFDPDRTQ (299 aa)). A helical membrane pass occupies residues 1251–1272 (RVFNVIIILLICFQATTIMIQK). The Extracellular portion of the chain corresponds to 1273 to 1276 (DEQS). The chain crosses the membrane as a helical span at residues 1277 to 1305 (PQMETAIFWMNSIFVMLFTLECILKLTAF). At 1306 to 1312 (RCHYFTS) the chain is on the cytoplasmic side. The chain crosses the membrane as a helical span at residues 1313 to 1338 (AWNVHDFMVVIFSITGLLLPLTIGQY). Residues 1339–1341 (FVP) are Extracellular-facing. Residues 1342 to 1362 (PSLVQLILLSRVIHILRPGKG) form a helical membrane-spanning segment. Topologically, residues 1363 to 1377 (PKVFHDLMLPLILAL) are cytoplasmic. Residues 1378 to 1402 (PALLNISLLIFLVMFIYAIFGMYNF) traverse the membrane as a helical segment. Residues 1403–1420 (AYVKKEAGINDVSNFETF) are Extracellular-facing. Residues 1421 to 1444 (GSSMLCLFQVTTFSGWDGMLDAIF) constitute an intramembrane region (pore-forming). The Extracellular segment spans residues 1445-1468 (NSQWSDCDPDKINPGTQVKGDCGS). Cys1451 and Cys1466 form a disulfide bridge. A helical transmembrane segment spans residues 1469–1504 (PSVGISYFVSYILISWLIIVNMYIVLIMEFLSIPSQ). The Cytoplasmic portion of the chain corresponds to 1505 to 1681 (KKSRTLSEDD…EEKASIQTQI (177 aa)). Positions 1647–1662 (NVSDTPAIDDRRDDLT) are enriched in basic and acidic residues. The interval 1647–1681 (NVSDTPAIDDRRDDLTSKGAHSGKIEEKASIQTQI) is disordered.

The protein belongs to the sodium channel (TC 1.A.1.10) family. SCN7A subfamily. The sodium channel formed by SCN7A is probably a heterooligomeric complex consisting of the ion conducting pore forming alpha subunit SCN7A and regulatory beta subunits such as SCN3B. Interacts with ATP1A1; activates ATP1A1 and thereby indirectly signals to nearby neurons to regulate sodium homeostasis. As to expression, not tissue specific but widely expressed. Expressed in regions of the central nervous system that control body fluid ionic balance.

The protein localises to the cell membrane. The catalysed reaction is Na(+)(in) = Na(+)(out). In terms of biological role, sodium leak channel functioning as an osmosensor regulating sodium ion levels in various tissues and organs. While most sodium channels are voltage-gated, SCN7A is not and lets sodium flow through membrane along its concentration gradient. In glial cells of the central nervous system, senses body-fluid sodium levels and controls salt intake behavior as well as voluntary water intake through activation of nearby neurons to maintain appropriate sodium levels in the body. By mediating sodium influx into keratinocytes, also plays a role in skin barrier homeostasis. In Mus musculus (Mouse), this protein is Sodium channel protein type 7 subunit alpha.